A 366-amino-acid polypeptide reads, in one-letter code: Cobalt-precorrin-5B C(1)-methyltransferase (366 aa).

Belongs to the CbiD family.

The enzyme catalyses Co-precorrin-5B + S-adenosyl-L-methionine = Co-precorrin-6A + S-adenosyl-L-homocysteine. Its pathway is cofactor biosynthesis; adenosylcobalamin biosynthesis; cob(II)yrinate a,c-diamide from sirohydrochlorin (anaerobic route): step 6/10. Functionally, catalyzes the methylation of C-1 in cobalt-precorrin-5B to form cobalt-precorrin-6A. The chain is Cobalt-precorrin-5B C(1)-methyltransferase from Pseudomonas paraeruginosa (strain DSM 24068 / PA7) (Pseudomonas aeruginosa (strain PA7)).